Here is a 295-residue protein sequence, read N- to C-terminus: Release factor glutamine methyltransferase (295 aa).

S-adenosyl-L-methionine is bound by residues 127–131 (GTGSG), D150, F179, and N195. 195–198 (NPPY) contacts substrate.

The protein belongs to the protein N5-glutamine methyltransferase family. PrmC subfamily.

The enzyme catalyses L-glutaminyl-[peptide chain release factor] + S-adenosyl-L-methionine = N(5)-methyl-L-glutaminyl-[peptide chain release factor] + S-adenosyl-L-homocysteine + H(+). Methylates the class 1 translation termination release factors RF1/PrfA and RF2/PrfB on the glutamine residue of the universally conserved GGQ motif. This Nitratidesulfovibrio vulgaris (strain ATCC 29579 / DSM 644 / CCUG 34227 / NCIMB 8303 / VKM B-1760 / Hildenborough) (Desulfovibrio vulgaris) protein is Release factor glutamine methyltransferase.